We begin with the raw amino-acid sequence, 386 residues long: D-galactosamine-6-phosphate deaminase AgaS (386 aa).

2 consecutive SIS domains span residues 59–217 and 222–366; these read LTPI…CIEM and LTER…PDNP.

The protein belongs to the SIS family. AgaS subfamily.

The protein localises to the cytoplasm. The enzyme catalyses D-galactosamine 6-phosphate + H2O = D-tagatopyranose 1-phosphate + NH4(+). The catalysed reaction is alpha-D-glucosamine 6-phosphate + H2O = beta-D-fructose 6-phosphate + NH4(+). Involved in the pathway of N-acetyl-D-galactosamine degradation. Catalyzes the conversion of D-galactosamine 6-phosphate (GalN-6-P) to D-tagatofuranose 6-phosphate (Tag-6-P). It can also catalyze the conversion of D-glucosamine 6-phosphate. The chain is D-galactosamine-6-phosphate deaminase AgaS from Shewanella sp. (strain ANA-3).